Reading from the N-terminus, the 66-residue chain is MPT51 antigen (66 aa).

The N-terminal stretch at 1–38 (MTVVRGVSALLRVFCIAMLAAGLGVALQPAAVTGAARA) is a signal peptide.

This sequence belongs to the mycobacterial A85 antigen family. As to quaternary structure, homodimer.

It is found in the secreted. In terms of biological role, may have a role in host tissue attachment, whereby ligands may include the serum protein fibronectin and small sugars. The chain is MPT51 antigen (mpt51) from Mycobacterium avium.